A 274-amino-acid chain; its full sequence is 2,3,4,5-tetrahydropyridine-2,6-dicarboxylate N-succinyltransferase (274 aa).

This sequence belongs to the transferase hexapeptide repeat family.

The protein localises to the cytoplasm. It carries out the reaction (S)-2,3,4,5-tetrahydrodipicolinate + succinyl-CoA + H2O = (S)-2-succinylamino-6-oxoheptanedioate + CoA. Its pathway is amino-acid biosynthesis; L-lysine biosynthesis via DAP pathway; LL-2,6-diaminopimelate from (S)-tetrahydrodipicolinate (succinylase route): step 1/3. The chain is 2,3,4,5-tetrahydropyridine-2,6-dicarboxylate N-succinyltransferase from Proteus mirabilis (strain HI4320).